A 266-amino-acid polypeptide reads, in one-letter code: Anamorsin homolog (266 aa).

Positions 1-164 (MIINFVGNTL…NITAENPDFL (164 aa)) are N-terminal SAM-like domain. The interval 165–185 (SNEDNDVSSDDEDLYNNEDDK) is linker. 4 residues coordinate [4Fe-4S] cluster: Cys-229, Cys-232, Cys-240, and Cys-243. 2 short sequence motifs (cx2C motif) span residues 229–232 (CGNC) and 240–243 (CASC). Residues 229–243 (CGNCYLGDAFRCASC) are fe-S binding site B.

Belongs to the anamorsin family. Monomer. The cofactor is [4Fe-4S] cluster.

It localises to the cytoplasm. Its subcellular location is the mitochondrion intermembrane space. Functionally, component of the cytosolic iron-sulfur (Fe-S) protein assembly (CIA) machinery. Required for the maturation of extramitochondrial Fe-S proteins. Part of an electron transfer chain functioning in an early step of cytosolic Fe-S biogenesis, facilitating the de novo assembly of a [4Fe-4S] cluster on the cytosolic Fe-S scaffold complex. Electrons are transferred from NADPH via a FAD- and FMN-containing diflavin oxidoreductase. Together with the diflavin oxidoreductase, also required for the assembly of the diferric tyrosyl radical cofactor of ribonucleotide reductase (RNR), probably by providing electrons for reduction during radical cofactor maturation in the catalytic small subunit. The chain is Anamorsin homolog from Plasmodium falciparum (isolate 3D7).